The chain runs to 281 residues: 2-C-methyl-D-erythritol 4-phosphate cytidylyltransferase (281 aa).

Belongs to the IspD/TarI cytidylyltransferase family. IspD subfamily.

The catalysed reaction is 2-C-methyl-D-erythritol 4-phosphate + CTP + H(+) = 4-CDP-2-C-methyl-D-erythritol + diphosphate. Its pathway is isoprenoid biosynthesis; isopentenyl diphosphate biosynthesis via DXP pathway; isopentenyl diphosphate from 1-deoxy-D-xylulose 5-phosphate: step 2/6. Its function is as follows. Catalyzes the formation of 4-diphosphocytidyl-2-C-methyl-D-erythritol from CTP and 2-C-methyl-D-erythritol 4-phosphate (MEP). This Psychrobacter arcticus (strain DSM 17307 / VKM B-2377 / 273-4) protein is 2-C-methyl-D-erythritol 4-phosphate cytidylyltransferase.